The following is a 226-amino-acid chain: uncharacterized protein (226 aa).

This sequence belongs to the HisA/HisF family.

This is an uncharacterized protein from Methanocaldococcus jannaschii (strain ATCC 43067 / DSM 2661 / JAL-1 / JCM 10045 / NBRC 100440) (Methanococcus jannaschii).